We begin with the raw amino-acid sequence, 90 residues long: Probable Fe(2+)-trafficking protein (90 aa).

This sequence belongs to the Fe(2+)-trafficking protein family.

Could be a mediator in iron transactions between iron acquisition and iron-requiring processes, such as synthesis and/or repair of Fe-S clusters in biosynthetic enzymes. This Verminephrobacter eiseniae (strain EF01-2) protein is Probable Fe(2+)-trafficking protein.